We begin with the raw amino-acid sequence, 166 residues long: MIALPRNRRPLFLAVFAYCAALLAFGLYLQHYQGIEPCPMCIMQRYAFALVGVIALVAGLHGPRGAGVRVYGGLLLLTALAGGSVAARQTWMQLYPPEIPECGPGLEYMLESFPLTSALPMIFRGAGDCSAIDWTFLGLSLANWSLLNFGAAALLALWLLFGRRVR.

Topologically, residues 1–11 are cytoplasmic; the sequence is MIALPRNRRPL. A helical membrane pass occupies residues 12-28; that stretch reads FLAVFAYCAALLAFGLY. Residues 29–46 lie on the Periplasmic side of the membrane; the sequence is LQHYQGIEPCPMCIMQRY. The cysteines at positions 38 and 41 are disulfide-linked. The helical transmembrane segment at 47-63 threads the bilayer; sequence AFALVGVIALVAGLHGP. Topologically, residues 64–70 are cytoplasmic; that stretch reads RGAGVRV. Residues 71–87 form a helical membrane-spanning segment; sequence YGGLLLLTALAGGSVAA. The Periplasmic segment spans residues 88–143; it reads RQTWMQLYPPEIPECGPGLEYMLESFPLTSALPMIFRGAGDCSAIDWTFLGLSLAN. Cys102 and Cys129 form a disulfide bridge. Residues 144-162 traverse the membrane as a helical segment; the sequence is WSLLNFGAAALLALWLLFG. The Cytoplasmic portion of the chain corresponds to 163 to 166; sequence RRVR.

It belongs to the DsbB family.

It is found in the cell inner membrane. Its function is as follows. Required for disulfide bond formation in some periplasmic proteins. Acts by oxidizing the DsbA protein. The polypeptide is Disulfide bond formation protein B (Azoarcus sp. (strain BH72)).